The following is a 311-amino-acid chain: Putative methylthioribose-1-phosphate isomerase (311 aa).

Substrate-binding positions include 46–48 (RGA), R80, and Q174. Residue D215 is the Proton donor of the active site. Residue 224-225 (NK) coordinates substrate.

Belongs to the eIF-2B alpha/beta/delta subunits family. MtnA subfamily.

The enzyme catalyses 5-(methylsulfanyl)-alpha-D-ribose 1-phosphate = 5-(methylsulfanyl)-D-ribulose 1-phosphate. In terms of biological role, catalyzes the interconversion of methylthioribose-1-phosphate (MTR-1-P) into methylthioribulose-1-phosphate (MTRu-1-P). The chain is Putative methylthioribose-1-phosphate isomerase from Methanothermobacter thermautotrophicus (strain ATCC 29096 / DSM 1053 / JCM 10044 / NBRC 100330 / Delta H) (Methanobacterium thermoautotrophicum).